A 666-amino-acid polypeptide reads, in one-letter code: Probable cytochrome c oxidase subunit 1 (666 aa).

The next 2 membrane-spanning stretches (helical) occupy residues 16 to 36 and 57 to 77; these read IPLI…VWVV and IGVM…SDAI. Residue His105 coordinates heme b. The next 13 membrane-spanning stretches (helical) occupy residues 108–128, 142–162, 192–212, 234–254, 277–297, 315–335, 346–366, 380–400, 413–433, 456–476, 493–513, 591–611, and 612–632; these read IMIF…VVPL, SVGF…LVIG, SLQI…TTVL, SNLL…MLLL, LIWA…FGIF, MVLA…HHFF, IFGI…YNWL, MLWA…GVLV, MFLV…GAFA, FWFT…AGML, WMLV…CQIM, SPTG…LIWH, and IWWM…VFAW. Cu cation contacts are provided by His283, Tyr287, His332, and His333. Residues 283-287 constitute a cross-link (1'-histidyl-3'-tyrosine (His-Tyr)); sequence HPEVY. Residues His418 and His420 each coordinate heme b.

The protein belongs to the heme-copper respiratory oxidase family.

It localises to the cell membrane. The enzyme catalyses 4 Fe(II)-[cytochrome c] + O2 + 8 H(+)(in) = 4 Fe(III)-[cytochrome c] + 2 H2O + 4 H(+)(out). The protein operates within energy metabolism; oxidative phosphorylation. This chain is Probable cytochrome c oxidase subunit 1, found in Bradyrhizobium diazoefficiens (strain JCM 10833 / BCRC 13528 / IAM 13628 / NBRC 14792 / USDA 110).